The sequence spans 1209 residues: Major DNA-binding protein (1209 aa).

The interval 290 to 312 is disordered; it reads NAGKGSGRAQRQGDGSGSKNSAS. The segment at 503–516 is a zinc-finger region; the sequence is CGLCNQATRPACAH. The short motif at 849–850 is the Required for filament formation element; the sequence is FW. The tract at residues 1182-1209 is required for nuclear localization; that stretch reads QKRSLPDDILFDMGAPPEKKSGLTFDML.

Belongs to the herpesviridae major DNA-binding protein family. As to quaternary structure, homooligomers. Forms double-helical filaments necessary for the formation of replication compartments within the host nucleus. Interacts with the origin-binding protein. Interacts with the helicase primase complex; this interaction stimulates primer synthesis activity of the helicase-primase complex. Interacts with the DNA polymerase. Interacts with the alkaline exonuclease; this interaction increases its nuclease processivity.

The protein localises to the host nucleus. Plays several crucial roles in viral infection. Participates in the opening of the viral DNA origin to initiate replication by interacting with the origin-binding protein. May disrupt loops, hairpins and other secondary structures present on ssDNA to reduce and eliminate pausing of viral DNA polymerase at specific sites during elongation. Promotes viral DNA recombination by performing strand-transfer, characterized by the ability to transfer a DNA strand from a linear duplex to a complementary single-stranded DNA circle. Can also catalyze the renaturation of complementary single strands. Additionally, reorganizes the host cell nucleus, leading to the formation of prereplicative sites and replication compartments. This process is driven by the protein which can form double-helical filaments in the absence of DNA. The sequence is that of Major DNA-binding protein from Equine herpesvirus 1 (strain V592) (EHV-1).